We begin with the raw amino-acid sequence, 117 residues long: Putative membrane protein insertion efficiency factor (117 aa).

It belongs to the UPF0161 family.

Its subcellular location is the cell inner membrane. In terms of biological role, could be involved in insertion of integral membrane proteins into the membrane. The chain is Putative membrane protein insertion efficiency factor from Nitrobacter winogradskyi (strain ATCC 25391 / DSM 10237 / CIP 104748 / NCIMB 11846 / Nb-255).